Reading from the N-terminus, the 465-residue chain is Cysteine--tRNA ligase (465 aa).

Residue cysteine 30 coordinates Zn(2+). Positions 32-42 (ITVYDYCHIGH) match the 'HIGH' region motif. Zn(2+)-binding residues include cysteine 214, histidine 239, and glutamate 243. The short motif at 271-275 (KMSKS) is the 'KMSKS' region element. Lysine 274 contributes to the ATP binding site.

Belongs to the class-I aminoacyl-tRNA synthetase family. In terms of assembly, monomer. The cofactor is Zn(2+).

The protein localises to the cytoplasm. The enzyme catalyses tRNA(Cys) + L-cysteine + ATP = L-cysteinyl-tRNA(Cys) + AMP + diphosphate. In Burkholderia mallei (strain NCTC 10229), this protein is Cysteine--tRNA ligase.